Here is a 702-residue protein sequence, read N- to C-terminus: Solute carrier organic anion transporter family member 1B3 (702 aa).

Residues 1–28 are Cytoplasmic-facing; sequence MDQHQHLNKTAESASSEKKKTRRCNGFK. Residues 29 to 48 form a helical membrane-spanning segment; the sequence is MFLAALSFSYIAKALGGIIM. Topologically, residues 49 to 67 are extracellular; it reads KISITQIERRFDISSSLAG. The chain crosses the membrane as a helical span at residues 68–88; that stretch reads LIDGSFEIGNLLVIVFVSYFG. Residues 89–94 lie on the Cytoplasmic side of the membrane; that stretch reads SKLHRP. A helical membrane pass occupies residues 95 to 119; the sequence is KLIGIGCLLMGTGSILTSLPHFFMG. Topologically, residues 120 to 168 are extracellular; it reads YYRYSKETHINPSENSTSSLSTCLINQTLSFNGTSPEIVEKDCVKESGS. Residues Asn-134, Asn-145, and Asn-151 are each glycosylated (N-linked (GlcNAc...) asparagine). Residues 169 to 197 traverse the membrane as a helical segment; sequence HMWIYVFMGNMLRGIGETPIVPLGISYID. Topologically, residues 198–216 are cytoplasmic; sequence DFAKEGHSSLYLGSLNAIG. A helical membrane pass occupies residues 217–237; that stretch reads MIGPVIGFALGSLFAKMYVDI. Topologically, residues 238 to 255 are extracellular; sequence GYVDLSTIRITPKDSRWV. A helical membrane pass occupies residues 256–280; it reads GAWWLGFLVSGLFSIISSIPFFFLP. Over 281–331 the chain is Cytoplasmic; it reads KNPNKPQKERKISLSLHVLKTNDDRNQTANLTNQGKNVTKNVTGFFQSLKS. 2 positions are modified to phosphoserine: Ser-293 and Ser-295. A helical membrane pass occupies residues 332 to 353; that stretch reads ILTNPLYVIFLLLTLLQVSSFI. Residues 354 to 373 are Extracellular-facing; sequence GSFTYVFKYMEQQYGQSASH. Residues 374-397 form a helical membrane-spanning segment; sequence ANFLLGIITIPTVATGMFLGGFII. Topologically, residues 398 to 401 are cytoplasmic; it reads KKFK. Residues 402-425 traverse the membrane as a helical segment; that stretch reads LSLVGIAKFSFLTSMISFLFQLLY. Topologically, residues 426 to 537 are extracellular; sequence FPLICESKSV…NTCTRKFFIY (112 aa). Residue Asn-445 is glycosylated (N-linked (GlcNAc...) asparagine). The 56-residue stretch at 453-508 folds into the Kazal-like domain; it reads DVPLSYCNSECNCDESQWEPVCGNNGITYLSPCLAGCKSSSGIKKHTVFYNCSCVE. Intrachain disulfides connect Cys-459-Cys-489, Cys-465-Cys-485, and Cys-474-Cys-506. Residues Asn-503 and Asn-516 are each glycosylated (N-linked (GlcNAc...) asparagine). Residues 538 to 560 traverse the membrane as a helical segment; the sequence is VAIQVINSLFSATGGTTFILLTV. Residues 561-569 are Cytoplasmic-facing; it reads KIVQPELKA. The chain crosses the membrane as a helical span at residues 570-595; that stretch reads LAMGFQSMVIRTLGGILAPIYFGALI. Residues 596-629 lie on the Extracellular side of the membrane; that stretch reads DKTCMKWSTNSCGAQGACRIYNSVFFGRVYLGLS. The helical transmembrane segment at 630 to 647 threads the bilayer; sequence IALRFPALVLYIVFIFAM. At 648-695 the chain is on the cytoplasmic side; it reads KKKFQGKDTKASDNERKVMDEANLEFLNNGEHFVPSAGTDSKTCNLDM. At Ser-683 the chain carries Phosphoserine.

The protein belongs to the organo anion transporter (TC 2.A.60) family. N-glycosylated. In terms of tissue distribution, highly expressed in liver, in particular at the basolateral membrane of hepatocytes near the central vein. Expressed in the placenta. In testis, primarily localized to the basal membrane of Sertoli cells and weakly expressed in Leydig cells and within the tubules.

The protein resides in the basolateral cell membrane. It is found in the basal cell membrane. It catalyses the reaction estrone 3-sulfate(out) + hydrogencarbonate(in) = estrone 3-sulfate(in) + hydrogencarbonate(out). It carries out the reaction 17beta-estradiol 17-O-(beta-D-glucuronate)(out) = 17beta-estradiol 17-O-(beta-D-glucuronate)(in). The enzyme catalyses taurocholate(out) = taurocholate(in). The catalysed reaction is estrone 3-sulfate(out) = estrone 3-sulfate(in). It catalyses the reaction dehydroepiandrosterone 3-sulfate(out) = dehydroepiandrosterone 3-sulfate(in). It carries out the reaction leukotriene C4(out) = leukotriene C4(in). The enzyme catalyses L-thyroxine(out) = L-thyroxine(in). The catalysed reaction is prostaglandin E2(out) = prostaglandin E2(in). It catalyses the reaction (4E,15E)-bilirubin IXalpha C8-beta-D-glucuronoside(out) = (4E,15E)-bilirubin IXalpha C8-beta-D-glucuronoside(in). It carries out the reaction bilirubin IXalpha bis-beta-D-glucuronoside(out) = bilirubin IXalpha bis-beta-D-glucuronoside(in). Mediates the Na(+)-independent uptake of organic anions. Shows broad substrate specificity, can transport both organic anions such as bile acid taurocholate (cholyltaurine) and conjugated steroids (17-beta-glucuronosyl estradiol, dehydroepiandrosterone sulfate (DHEAS), and estrone 3-sulfate), as well as eicosanoid leukotriene C4, prostaglandin E2 and L-thyroxine (T4). Hydrogencarbonate/HCO3(-) acts as the probable counteranion that exchanges for organic anions. Shows a pH-sensitive substrate specificity towards sulfated steroids, taurocholate and T4 which may be ascribed to the protonation state of the binding site and leads to a stimulation of substrate transport in an acidic microenvironment. Involved in the clearance of bile acids and organic anions from the liver. Can take up bilirubin glucuronides from plasma into the liver, contributing to the detoxification-enhancing liver-blood shuttling loop. Transports coproporphyrin I and III, by-products of heme synthesis, and may be involved in their hepatic disposition. May contribute to regulate the transport of organic compounds in testes across the blood-testis-barrier. Can transport HMG-CoA reductase inhibitors (also known as statins) such as pitavastatin, a clinically important class of hypolipidemic drugs. May play an important role in plasma and tissue distribution of the structurally diverse chemotherapeutic drugs methotrexate and paclitaxel. May also transport antihypertension agents, such as the angiotensin-converting enzyme (ACE) inhibitor prodrug enalapril, and the highly selective angiotensin II AT1-receptor antagonist valsartan, in the liver. The polypeptide is Solute carrier organic anion transporter family member 1B3 (SLCO1B3) (Homo sapiens (Human)).